A 350-amino-acid chain; its full sequence is Probable nicotinate-nucleotide adenylyltransferase/Ap4A hydrolase (350 aa).

The naMN adenylyltransferase stretch occupies residues 1–187; it reads MKQKIIIFGG…YINTNHLYLI (187 aa). Residues 196–350 form an ap4A hydrolase region; the sequence is DKRFQHCLRV…LKYVQNLVKD (155 aa). One can recognise an HD domain in the interval 198–310; the sequence is RFQHCLRVGK…VYLADKLEPN (113 aa). H201 contributes to the ADP binding site. Residues H201, H230, and D231 each contribute to the Fe cation site. ADP contacts are provided by residues 231–234, H261, 287–288, D305, and R311; these read DLAK and HT. D305 serves as a coordination point for Fe cation.

This sequence in the N-terminal section; belongs to the NadD family. The protein in the C-terminal section; belongs to the Ap4A hydrolase YqeK family.

It catalyses the reaction nicotinate beta-D-ribonucleotide + ATP + H(+) = deamido-NAD(+) + diphosphate. It carries out the reaction P(1),P(4)-bis(5'-adenosyl) tetraphosphate + H2O = 2 ADP + 2 H(+). It participates in cofactor biosynthesis; NAD(+) biosynthesis; deamido-NAD(+) from nicotinate D-ribonucleotide: step 1/1. In terms of biological role, catalyzes the reversible adenylation of nicotinate mononucleotide (NaMN) to nicotinic acid adenine dinucleotide (NaAD). Hydrolyzes diadenosine 5',5'''-P1,P4-tetraphosphate (Ap4A) to yield ADP. This Mycoplasma genitalium (strain ATCC 33530 / DSM 19775 / NCTC 10195 / G37) (Mycoplasmoides genitalium) protein is Probable nicotinate-nucleotide adenylyltransferase/Ap4A hydrolase.